Reading from the N-terminus, the 571-residue chain is Putative clathrin assembly protein At2g01600 (571 aa).

In terms of domain architecture, ENTH spans 24 to 161; sequence RVNSEYADLD…ECFRVLKYDT (138 aa). Disordered regions lie at residues 325-346 and 474-571; these read YRPDDGLTTEDTEPSHEEREML and PAPN…TGLI. Positions 337–346 are enriched in basic and acidic residues; sequence EPSHEEREML. Low complexity predominate over residues 508–522; the sequence is QQTYQHQPQPTYQHQ. Composition is skewed to polar residues over residues 523-532 and 543-571; these read SNPPTNNSNP and PVSQQPNTSGYGDFSVNQHNNPFRSTGLI.

It is found in the membrane. The protein resides in the clathrin-coated pit. Its subcellular location is the golgi apparatus. It localises to the cytoplasmic vesicle. The protein localises to the clathrin-coated vesicle. This chain is Putative clathrin assembly protein At2g01600, found in Arabidopsis thaliana (Mouse-ear cress).